The chain runs to 306 residues: Methionyl-tRNA formyltransferase (306 aa).

108-111 lines the (6S)-5,6,7,8-tetrahydrofolate pocket; that stretch reads SLLP.

Belongs to the Fmt family.

The catalysed reaction is L-methionyl-tRNA(fMet) + (6R)-10-formyltetrahydrofolate = N-formyl-L-methionyl-tRNA(fMet) + (6S)-5,6,7,8-tetrahydrofolate + H(+). Attaches a formyl group to the free amino group of methionyl-tRNA(fMet). The formyl group appears to play a dual role in the initiator identity of N-formylmethionyl-tRNA by promoting its recognition by IF2 and preventing the misappropriation of this tRNA by the elongation apparatus. The protein is Methionyl-tRNA formyltransferase of Pseudarthrobacter chlorophenolicus (strain ATCC 700700 / DSM 12829 / CIP 107037 / JCM 12360 / KCTC 9906 / NCIMB 13794 / A6) (Arthrobacter chlorophenolicus).